We begin with the raw amino-acid sequence, 126 residues long: MTTSSTKTTAQAHGRYIRGSASKVRRVLDQIRGRTYRDALIMLEFMPYRSTEPITKVLRSAVANAENNLGLDPSSLMISTATADMGPPMKRYRPRAQGRAFAIKKQTCHISISVSATQSTNSEDSD.

The protein belongs to the universal ribosomal protein uL22 family. Part of the 50S ribosomal subunit.

Functionally, this protein binds specifically to 23S rRNA; its binding is stimulated by other ribosomal proteins, e.g. L4, L17, and L20. It is important during the early stages of 50S assembly. It makes multiple contacts with different domains of the 23S rRNA in the assembled 50S subunit and ribosome. The globular domain of the protein is located near the polypeptide exit tunnel on the outside of the subunit, while an extended beta-hairpin is found that lines the wall of the exit tunnel in the center of the 70S ribosome. The protein is Large ribosomal subunit protein uL22 of Prochlorococcus marinus (strain NATL2A).